The primary structure comprises 521 residues: U4/U6 small nuclear ribonucleoprotein Prp4 (521 aa).

The residue at position 26 (Lys26) is an N6-acetyllysine. WD repeat units follow at residues 228 to 267 (GDDRPISYCHFSPNSKMLATACWSGLCKLWSVPDCSLLHT), 270 to 317 (GHNT…PVAD), 320 to 359 (GHTVRVARVMWHPSGRFLGTTCYDRSWRLWDLEAQEEILH), 362 to 401 (GHSMGVYDIAFHQDGSLAGTGGLDAFGRVWDLRTGRCIMF), 404 to 443 (GHLKEIYGINFSPNGYHIATGSGDNTCKVWDLRQRRCVYT), 446 to 486 (AHQN…PLKT), and 489 to 521 (GHEGKVMGLDISSDGQLIATCSYDRTFKLWMAE).

As to quaternary structure, component of the precatalytic spliceosome (spliceosome B complex). Component of the U4/U6-U5 tri-snRNP complex, a building block of the precatalytic spliceosome (spliceosome B complex). The U4/U6-U5 tri-snRNP complex is composed of the U4, U6 and U5 snRNAs and at least PRPF3, PRPF4, PRPF6, PRPF8, PRPF31, SNRNP200, TXNL4A, SNRNP40, SNRPB, SNRPD1, SNRPD2, SNRPD3, SNRPE, SNRPF, SNRPG, DDX23, CD2BP2, PPIH, SNU13, EFTUD2, SART1 and USP39, plus LSM2, LSM3, LSM4, LSM5, LSM6, LSM7 and LSM8. Interacts directly with PRPF18, PPIH and PRPF3. Part of a heteromeric complex containing PPIH, PRPF3 and PRPF4 that is stable in the absence of RNA. Interacts with ERCC6.

It localises to the nucleus. Its subcellular location is the nucleus speckle. Functionally, plays a role in pre-mRNA splicing as component of the U4/U6-U5 tri-snRNP complex that is involved in spliceosome assembly, and as component of the precatalytic spliceosome (spliceosome B complex). This is U4/U6 small nuclear ribonucleoprotein Prp4 (Prpf4) from Mus musculus (Mouse).